Here is an 89-residue protein sequence, read N- to C-terminus: Phosphoribulokinase, chloroplastic (89 aa).

The segment at 1–22 (LTSVFGGAAEPPRGGNPDSNTL) is disordered.

This sequence belongs to the phosphoribulokinase family.

Its subcellular location is the plastid. It is found in the chloroplast. It catalyses the reaction D-ribulose 5-phosphate + ATP = D-ribulose 1,5-bisphosphate + ADP + H(+). The protein operates within carbohydrate biosynthesis; Calvin cycle. Light regulated via thioredoxin by reversible oxidation/reduction of sulfhydryl/disulfide groups. In Vitis sp. (Grape), this protein is Phosphoribulokinase, chloroplastic.